A 510-amino-acid chain; its full sequence is Propionyl-CoA carboxylase beta chain (510 aa).

The region spanning Met-1 to Pro-257 is the CoA carboxyltransferase N-terminal domain. Residues Met-1–Lys-504 are carboxyltransferase. Residues Arg-264–Lys-504 enclose the CoA carboxyltransferase C-terminal domain.

This sequence belongs to the AccD/PCCB family. In terms of assembly, probably a dodecamer composed of six biotin-containing alpha subunits and six beta subunits.

The enzyme catalyses propanoyl-CoA + hydrogencarbonate + ATP = (S)-methylmalonyl-CoA + ADP + phosphate + H(+). Its pathway is metabolic intermediate metabolism; propanoyl-CoA degradation; succinyl-CoA from propanoyl-CoA: step 1/3. The sequence is that of Propionyl-CoA carboxylase beta chain from Cereibacter sphaeroides (strain ATCC 17023 / DSM 158 / JCM 6121 / CCUG 31486 / LMG 2827 / NBRC 12203 / NCIMB 8253 / ATH 2.4.1.) (Rhodobacter sphaeroides).